A 443-amino-acid polypeptide reads, in one-letter code: Protein SCAR (443 aa).

Residues 1–96 (MVLITRYLPS…DYHRNTSIDT (96 aa)) are interaction with brk1 and abiA. Residues 166-201 (VAEQQKLHEEARQRKRERREARLKKKGEKNEVEVKK) are a coiled coil. Disordered regions lie at residues 176 to 197 (ARQRKRERREARLKKKGEKNEV) and 220 to 386 (INIE…RSDL). Residues 178 to 192 (QRKRERREARLKKKG) show a composition bias toward basic residues. Residues 221 to 252 (NIESPHTSSPQIQHQSNNTATPQHTTQHFGTN) are compositionally biased toward polar residues. 2 stretches are compositionally biased toward low complexity: residues 263–277 (SQSSPSQQHSPINSY) and 285–305 (NTSTPSPSSSFQGRPPSTGFN). Positions 306 to 323 (TPPPPMSNNNNMPPPPPM) are enriched in pro residues. A compositionally biased stretch (polar residues) spans 324–338 (QQNGGAANNRLSVHN). The span at 346–365 (PAPPPPPPPPSAPAPPPPPM) shows a compositional bias: pro residues. Residues 382-399 (ARSDLLSSIMQGMALKPA) enclose the WH2 domain.

Belongs to the SCAR/WAVE family. In terms of assembly, part of a Scar/WAVE complex containing brk1, scrA, abiA, pirA and napA. Interacts with brk1 and abiA.

The protein resides in the cytoplasm. Its subcellular location is the cytoskeleton. It is found in the cell projection. The protein localises to the pseudopodium tip. It localises to the filopodium tip. Functionally, involved in regulation of actin and microtubule organization. Regulates phagocytosis and macropinocytosis. This chain is Protein SCAR (scrA), found in Dictyostelium discoideum (Social amoeba).